The primary structure comprises 313 residues: 4-hydroxy-3-methylbut-2-enyl diphosphate reductase (313 aa).

Cys13 contacts [4Fe-4S] cluster. (2E)-4-hydroxy-3-methylbut-2-enyl diphosphate is bound by residues His41 and His75. His41 and His75 together coordinate dimethylallyl diphosphate. Positions 41 and 75 each coordinate isopentenyl diphosphate. Position 97 (Cys97) interacts with [4Fe-4S] cluster. (2E)-4-hydroxy-3-methylbut-2-enyl diphosphate is bound at residue His125. Residue His125 participates in dimethylallyl diphosphate binding. His125 is an isopentenyl diphosphate binding site. Catalysis depends on Glu127, which acts as the Proton donor. Thr168 is a (2E)-4-hydroxy-3-methylbut-2-enyl diphosphate binding site. Cys218 contributes to the [4Fe-4S] cluster binding site. (2E)-4-hydroxy-3-methylbut-2-enyl diphosphate-binding residues include Ser246, Ser247, Asn248, and Ser295. The dimethylallyl diphosphate site is built by Ser246, Ser247, Asn248, and Ser295. Residues Ser246, Ser247, Asn248, and Ser295 each contribute to the isopentenyl diphosphate site.

Belongs to the IspH family. The cofactor is [4Fe-4S] cluster.

It carries out the reaction isopentenyl diphosphate + 2 oxidized [2Fe-2S]-[ferredoxin] + H2O = (2E)-4-hydroxy-3-methylbut-2-enyl diphosphate + 2 reduced [2Fe-2S]-[ferredoxin] + 2 H(+). The catalysed reaction is dimethylallyl diphosphate + 2 oxidized [2Fe-2S]-[ferredoxin] + H2O = (2E)-4-hydroxy-3-methylbut-2-enyl diphosphate + 2 reduced [2Fe-2S]-[ferredoxin] + 2 H(+). The protein operates within isoprenoid biosynthesis; dimethylallyl diphosphate biosynthesis; dimethylallyl diphosphate from (2E)-4-hydroxy-3-methylbutenyl diphosphate: step 1/1. Its pathway is isoprenoid biosynthesis; isopentenyl diphosphate biosynthesis via DXP pathway; isopentenyl diphosphate from 1-deoxy-D-xylulose 5-phosphate: step 6/6. Functionally, catalyzes the conversion of 1-hydroxy-2-methyl-2-(E)-butenyl 4-diphosphate (HMBPP) into a mixture of isopentenyl diphosphate (IPP) and dimethylallyl diphosphate (DMAPP). Acts in the terminal step of the DOXP/MEP pathway for isoprenoid precursor biosynthesis. The protein is 4-hydroxy-3-methylbut-2-enyl diphosphate reductase of Chlorobium phaeovibrioides (strain DSM 265 / 1930) (Prosthecochloris vibrioformis (strain DSM 265)).